The sequence spans 138 residues: MRALWIVAVLLVAVEGHLLQFNKMIKFETRKNAIPFYAFYGCYCGWGGRGRPKDATDRCCFVHDCCYGKLANCNTKWDIYPYSLKSGYITCGKGSWCEEQICECDRVAAECLRRSLSTYKYGYMFYPDSRCKGPSEQC.

The first 16 residues, 1-16 (MRALWIVAVLLVAVEG), serve as a signal peptide directing secretion. 7 disulfides stabilise this stretch: Cys42/Cys131, Cys44/Cys60, Cys59/Cys111, Cys65/Cys138, Cys66/Cys104, Cys73/Cys97, and Cys91/Cys102. The Ca(2+) site is built by Tyr43, Gly45, and Gly47. Residue His63 is part of the active site. Asp64 contributes to the Ca(2+) binding site. Residue Asp105 is part of the active site.

It belongs to the phospholipase A2 family. Group II subfamily. In terms of assembly, heterodimer of an acidic subunit and a basic chain. The acidic subunit is non-toxic, without enzymatic activity and comprises 3 peptides that are cross-linked by 7 disulfide bridges. The basic subunit is toxic, has phospholipase A2 activity and is composed of a single chain. Ca(2+) is required as a cofactor. In terms of tissue distribution, expressed by the venom gland.

The protein resides in the secreted. It catalyses the reaction a 1,2-diacyl-sn-glycero-3-phosphocholine + H2O = a 1-acyl-sn-glycero-3-phosphocholine + a fatty acid + H(+). Its function is as follows. Snake venom phospholipase A2 (PLA2) that shows presynaptic neurotoxicity. PLA2 catalyzes the calcium-dependent hydrolysis of the 2-acyl groups in 3-sn-phosphoglycerides. In Crotalus horridus (Timber rattlesnake), this protein is Basic phospholipase A2 canebraxin B.